We begin with the raw amino-acid sequence, 465 residues long: UDP-N-acetylmuramate--L-alanine ligase (465 aa).

115-121 (GAHGKTT) is a binding site for ATP.

It belongs to the MurCDEF family.

The protein localises to the cytoplasm. It catalyses the reaction UDP-N-acetyl-alpha-D-muramate + L-alanine + ATP = UDP-N-acetyl-alpha-D-muramoyl-L-alanine + ADP + phosphate + H(+). It participates in cell wall biogenesis; peptidoglycan biosynthesis. Its function is as follows. Cell wall formation. In Coxiella burnetii (strain CbuG_Q212) (Coxiella burnetii (strain Q212)), this protein is UDP-N-acetylmuramate--L-alanine ligase.